The primary structure comprises 343 residues: Ribosomal RNA small subunit methyltransferase C (343 aa).

This sequence belongs to the methyltransferase superfamily. RsmC family. Monomer.

It is found in the cytoplasm. The enzyme catalyses guanosine(1207) in 16S rRNA + S-adenosyl-L-methionine = N(2)-methylguanosine(1207) in 16S rRNA + S-adenosyl-L-homocysteine + H(+). Specifically methylates the guanine in position 1207 of 16S rRNA in the 30S particle. This is Ribosomal RNA small subunit methyltransferase C from Escherichia coli O157:H7.